Consider the following 355-residue polypeptide: Putative cyclin-A3-1 (355 aa).

This sequence belongs to the cyclin family. Cyclin AB subfamily.

This Arabidopsis thaliana (Mouse-ear cress) protein is Putative cyclin-A3-1 (CYCA3-1).